Reading from the N-terminus, the 888-residue chain is DNA mismatch repair protein MutS (888 aa).

641–648 (GPNMAGKS) is a binding site for ATP.

This sequence belongs to the DNA mismatch repair MutS family.

Its function is as follows. This protein is involved in the repair of mismatches in DNA. It is possible that it carries out the mismatch recognition step. This protein has a weak ATPase activity. In Rickettsia bellii (strain OSU 85-389), this protein is DNA mismatch repair protein MutS.